The chain runs to 585 residues: Mitochondrial translation ATP-dependent RNA helicase mrh5 (585 aa).

Positions 87–117 (PKFHELPLNQNILDGLSTNFAEYKNSTPLQQ) match the Q motif motif. In terms of domain architecture, Helicase ATP-binding spans 121–351 (NALMKSGVSF…SRYITDQLGI (231 aa)). 134–141 (GWNGSGKS) serves as a coordination point for ATP. Positions 261–264 (DESD) match the DEAD box motif. The 195-residue stretch at 390–584 (NLPYEFVRFN…PKSYEFDDEH (195 aa)) folds into the Helicase C-terminal domain.

It belongs to the DEAD box helicase family. As to quaternary structure, component of the MRH5C complex, composed of mrh5, ppr4, mtf2, and sls1. Proteins mtf2 and sls1 form a subcomplex that serves as a scaffold to bring mrh5 and ppr4 together. The MRH5C complex associates with the small subunit of the mitochondrial ribosome.

Its subcellular location is the mitochondrion. It catalyses the reaction ATP + H2O = ADP + phosphate + H(+). Functionally, translation activation factor that as part of the MRH5C complex specifically recruits cox1 mRNA to the mitochondrial ribosome for translation initiation. This chain is Mitochondrial translation ATP-dependent RNA helicase mrh5, found in Schizosaccharomyces pombe (strain 972 / ATCC 24843) (Fission yeast).